The following is a 506-amino-acid chain: Galactose/methyl galactoside import ATP-binding protein MglA (506 aa).

2 consecutive ABC transporter domains span residues 14–249 (LEMS…VGRS) and 264–506 (VILE…SLHL). 46-53 (GENGAGKS) is a binding site for ATP.

Belongs to the ABC transporter superfamily. Galactose/methyl galactoside importer (TC 3.A.1.2.3) family. In terms of assembly, the complex is composed of one ATP-binding protein (MglA), two transmembrane proteins (MglC) and a solute-binding protein (MglB).

It is found in the cell inner membrane. It carries out the reaction D-galactose(out) + ATP + H2O = D-galactose(in) + ADP + phosphate + H(+). It catalyses the reaction methyl beta-D-galactoside(out) + ATP + H2O = methyl beta-D-galactoside(in) + ADP + phosphate + H(+). In terms of biological role, part of the ABC transporter complex MglABC involved in galactose/methyl galactoside import. Responsible for energy coupling to the transport system. This Escherichia coli O157:H7 protein is Galactose/methyl galactoside import ATP-binding protein MglA.